Consider the following 397-residue polypeptide: Phosphoglycerate kinase (397 aa).

Residues 19-21 (DFN), Arg-35, 58-61 (HLGR), Arg-117, and Arg-150 each bind substrate. ATP-binding positions include Lys-201, Glu-323, and 349–352 (GGDS).

The protein belongs to the phosphoglycerate kinase family. Monomer.

Its subcellular location is the cytoplasm. It carries out the reaction (2R)-3-phosphoglycerate + ATP = (2R)-3-phospho-glyceroyl phosphate + ADP. It functions in the pathway carbohydrate degradation; glycolysis; pyruvate from D-glyceraldehyde 3-phosphate: step 2/5. The chain is Phosphoglycerate kinase from Syntrophobacter fumaroxidans (strain DSM 10017 / MPOB).